The following is a 193-amino-acid chain: Holliday junction branch migration complex subunit RuvA (193 aa).

Residues 1 to 64 (MIGRIAGTLI…EDAHLLYGFG (64 aa)) are domain I. The interval 65-143 (TAAERETFRQ…ADLGTVPGGP (79 aa)) is domain II. Residues 144 to 151 (AVSDDAVD) form a flexible linker region. A domain III region spans residues 151–193 (DVLNALLALGYSDKEAAQAIKQVPAGTGVSEGIKLALKALSKG).

The protein belongs to the RuvA family. In terms of assembly, homotetramer. Forms an RuvA(8)-RuvB(12)-Holliday junction (HJ) complex. HJ DNA is sandwiched between 2 RuvA tetramers; dsDNA enters through RuvA and exits via RuvB. An RuvB hexamer assembles on each DNA strand where it exits the tetramer. Each RuvB hexamer is contacted by two RuvA subunits (via domain III) on 2 adjacent RuvB subunits; this complex drives branch migration. In the full resolvosome a probable DNA-RuvA(4)-RuvB(12)-RuvC(2) complex forms which resolves the HJ.

Its subcellular location is the cytoplasm. Functionally, the RuvA-RuvB-RuvC complex processes Holliday junction (HJ) DNA during genetic recombination and DNA repair, while the RuvA-RuvB complex plays an important role in the rescue of blocked DNA replication forks via replication fork reversal (RFR). RuvA specifically binds to HJ cruciform DNA, conferring on it an open structure. The RuvB hexamer acts as an ATP-dependent pump, pulling dsDNA into and through the RuvAB complex. HJ branch migration allows RuvC to scan DNA until it finds its consensus sequence, where it cleaves and resolves the cruciform DNA. The polypeptide is Holliday junction branch migration complex subunit RuvA (Ralstonia nicotianae (strain ATCC BAA-1114 / GMI1000) (Ralstonia solanacearum)).